The primary structure comprises 269 residues: NAD kinase (269 aa).

The active-site Proton acceptor is the Asp-62. NAD(+)-binding positions include 62–63 (DG), 130–131 (NE), Lys-141, Arg-158, Asp-160, 171–176 (TAYAMS), Ala-195, and Gln-229.

This sequence belongs to the NAD kinase family. A divalent metal cation serves as cofactor.

It localises to the cytoplasm. The catalysed reaction is NAD(+) + ATP = ADP + NADP(+) + H(+). Involved in the regulation of the intracellular balance of NAD and NADP, and is a key enzyme in the biosynthesis of NADP. Catalyzes specifically the phosphorylation on 2'-hydroxyl of the adenosine moiety of NAD to yield NADP. The sequence is that of NAD kinase from Methanospirillum hungatei JF-1 (strain ATCC 27890 / DSM 864 / NBRC 100397 / JF-1).